The sequence spans 128 residues: Large ribosomal subunit protein bL12 (128 aa).

This sequence belongs to the bacterial ribosomal protein bL12 family. Homodimer. Part of the ribosomal stalk of the 50S ribosomal subunit. Forms a multimeric L10(L12)X complex, where L10 forms an elongated spine to which 2 to 4 L12 dimers bind in a sequential fashion. Binds GTP-bound translation factors.

Functionally, forms part of the ribosomal stalk which helps the ribosome interact with GTP-bound translation factors. Is thus essential for accurate translation. The protein is Large ribosomal subunit protein bL12 of Brachyspira hyodysenteriae (strain ATCC 49526 / WA1).